Here is a 237-residue protein sequence, read N- to C-terminus: uncharacterized protein (237 aa).

A helical transmembrane segment spans residues 53–70; the sequence is LIFLATVLAGLILFYFGV. The interval 85–155 is disordered; that stretch reads PPIVIKPVAP…TQEKKDVKVA (71 aa). A coiled-coil region spans residues 98–157; that stretch reads KTQESNQTTKKEVKQEEQKKEEPKKMVQKQETQEKREVKKSEKNEVKQTQEKKDVKVAKK. 2 stretches are compositionally biased toward basic and acidic residues: residues 106 to 122 and 128 to 155; these read TKKEVKQEEQKKEEPKK and ETQEKREVKKSEKNEVKQTQEKKDVKVA. Residues 165-237 enclose the SPOR domain; it reads AANLRTYKFQ…HFKDAIFVRK (73 aa).

Its subcellular location is the membrane. This is an uncharacterized protein from Aquifex aeolicus (strain VF5).